We begin with the raw amino-acid sequence, 2033 residues long: Major viral transcription factor ICP4 homolog (2033 aa).

A compositionally biased stretch (low complexity) spans 1–16; the sequence is MFWHQPRQQQLRQLQR. Disordered regions lie at residues 1 to 47, 95 to 145, 157 to 199, 218 to 240, 277 to 301, 313 to 338, 350 to 461, 505 to 527, 719 to 747, 1015 to 1064, 1085 to 1186, 1294 to 1342, 1420 to 1451, 1531 to 1612, 1636 to 1655, 1664 to 1718, and 1746 to 2033; these read MFWH…PPSP, FSDP…LPAP, LSSS…GSSY, PPRSVPDCRRGEPVSEDGMADRC, DQSPRGLGAEPHVAEAGRPSSCVGE, EERKEAARRSPDAERNDDEEEYESLP, AEIN…GAVA, SFAQRQQPRQQQHAPRNKPARQR, LPPDGGDDRDGGGKSRGGRGGGSKDASRT, GKQS…GALN, LLSD…PGDP, ETWR…EGGT, ASPHRGVGGKHRDKRPCLAEGTPSAPSCRDAA, VVFP…PPAA, RFDEADGEDPLPPAACGGKP, LCEQ…SPSP, and EISP…GTER. Over residues 157 to 173 the composition is skewed to low complexity; sequence LSSSSPSGSSRGSVTSP. A compositionally biased stretch (basic and acidic residues) spans 223–240; the sequence is PDCRRGEPVSEDGMADRC. Basic and acidic residues predominate over residues 313 to 326; the sequence is EERKEAARRSPDAE. Residues 359-368 show a composition bias toward acidic residues; that stretch reads ESDEAEDEDA. Residues 507 to 518 show a composition bias toward low complexity; it reads AQRQQPRQQQHA. Residues 732-741 are compositionally biased toward gly residues; it reads KSRGGRGGGS. The segment covering 1031–1056 has biased composition (low complexity); it reads RATASSPRTPASRPPHGSAAAPPSGR. The span at 1086-1097 shows a compositional bias: acidic residues; it reads LSDEAGTDDDGD. A compositionally biased stretch (low complexity) spans 1169–1181; the sequence is SSSSFASSSLASA. A compositionally biased stretch (basic and acidic residues) spans 1294-1303; it reads ETWRDAEDHP. The span at 1575 to 1591 shows a compositional bias: basic and acidic residues; sequence SHDRSPSSSSRRRDGRP. Over residues 1592 to 1602 the composition is skewed to basic residues; the sequence is SSRRRPSRRMS. Composition is skewed to basic and acidic residues over residues 1752-1765 and 1774-1795; these read RRRDAEGRRFGCRQ and EGGRESPERVLGRRQSRRDSVP. Low complexity predominate over residues 1812-1843; the sequence is SAGRSSSSSSSSSSSSSSSPSSRPSRSATPSL. The segment covering 1853–1869 has biased composition (basic and acidic residues); sequence APVDRSRSGRRRERDRP. Polar residues predominate over residues 1912-1921; it reads TPSSATTLPS. Residues 1927–1936 show a composition bias toward acidic residues; it reads DSVDETETED. The segment covering 1937–1948 has biased composition (low complexity); sequence SAPPARLAPSPL.

This sequence belongs to the herpesviridae ICP4 family. Post-translationally, a long stretch of serine residues may be a major site of phosphorylation.

It localises to the host nucleus. Its function is as follows. This IE protein is a multifunctional protein capable of migrating to the nucleus, binding to DNA, trans-activating other viral genes, and autoregulating its own synthesis. It is required for the switch from immediate-early to early mode of gene expression. This Amazona oratrix (yellow-headed parrot) protein is Major viral transcription factor ICP4 homolog (ICP4B).